A 123-amino-acid chain; its full sequence is DNA-directed RNA polymerase subunit omega (123 aa).

The interval 72-100 (QRVLPSEDEEDAAREERGQQMEALPAPPV) is disordered.

It belongs to the RNA polymerase subunit omega family. As to quaternary structure, the RNAP catalytic core consists of 2 alpha, 1 beta, 1 beta' and 1 omega subunit. When a sigma factor is associated with the core the holoenzyme is formed, which can initiate transcription.

It carries out the reaction RNA(n) + a ribonucleoside 5'-triphosphate = RNA(n+1) + diphosphate. Promotes RNA polymerase assembly. Latches the N- and C-terminal regions of the beta' subunit thereby facilitating its interaction with the beta and alpha subunits. This Maricaulis maris (strain MCS10) (Caulobacter maris) protein is DNA-directed RNA polymerase subunit omega.